We begin with the raw amino-acid sequence, 338 residues long: Transcription factor AP-4 (338 aa).

Positions 48-99 (IRREIANSNERRRMQSINAGFQSLKTLIPHTDGEKLSKAAILQQTAEYIFSL) constitute a bHLH domain. Positions 100–120 (EQEKTRLLQQNTQLKRFIQEL) are leucine-zipper 1. Positions 118 to 141 (QELSGSSPKRRRAEDKDEGIGSPD) are disordered. 3 positions are modified to phosphoserine: serine 123, serine 124, and serine 139. A Glycyl lysine isopeptide (Lys-Gly) (interchain with G-Cter in SUMO2) cross-link involves residue lysine 147. Residues 151–179 (LRREMIELRQQLDKERSVRMMLEEQVRSL) are leucine-zipper 2. Glycyl lysine isopeptide (Lys-Gly) (interchain with G-Cter in SUMO2) cross-links involve residues lysine 187, lysine 189, and lysine 285. Over residues 283-294 (QEKQELEEEQRR) the composition is skewed to basic and acidic residues. The tract at residues 283 to 338 (QEKQELEEEQRRAVIVKPVRSCPEAPTSDTASDSEASDSDAMDQSREEPSGDGELP) is disordered.

As to quaternary structure, efficient DNA binding requires dimerization with another bHLH protein. Homodimer.

The protein resides in the nucleus. Functionally, transcription factor that activates both viral and cellular genes by binding to the symmetrical DNA sequence 5'-CAGCTG-3'. The protein is Transcription factor AP-4 (TFAP4) of Homo sapiens (Human).